Consider the following 248-residue polypeptide: MNATVHDLDGGDAGSVELPAIFETAFRPDLIGRAVSAAQANRKQAYGADEFAGLRTPAESFGSGRGLAHIPRSENVARRVPNAVSGRAAHPPKAEKDQTKSLNDKERQLAIRSAIAATADAETVAERGHAFDEDLDLPLVVSDEFEDLNKTQEALGVLEAVGADADIERAEEGRSVRAGRGKTRGRKYSQPKSVLVVTSEEPSRAARNLSGVDVATAREVNAEDLAPGAHPGRLTLWTESAIEEVADR.

Disordered stretches follow at residues 72 to 103 and 173 to 210; these read RSENVARRVPNAVSGRAAHPPKAEKDQTKSLN and GRSVRAGRGKTRGRKYSQPKSVLVVTSEEPSRAARNLS. Positions 92–103 are enriched in basic and acidic residues; sequence PKAEKDQTKSLN. The segment covering 177-189 has biased composition (basic residues); it reads RAGRGKTRGRKYS.

This sequence belongs to the universal ribosomal protein uL4 family. As to quaternary structure, part of the 50S ribosomal subunit.

Its function is as follows. One of the primary rRNA binding proteins, this protein initially binds near the 5'-end of the 23S rRNA. It is important during the early stages of 50S assembly. It makes multiple contacts with different domains of the 23S rRNA in the assembled 50S subunit and ribosome. In terms of biological role, forms part of the polypeptide exit tunnel. The polypeptide is Large ribosomal subunit protein uL4 (Halorubrum lacusprofundi (strain ATCC 49239 / DSM 5036 / JCM 8891 / ACAM 34)).